We begin with the raw amino-acid sequence, 609 residues long: Mitogen-activated protein kinase kinase kinase 3 (609 aa).

Positions 1 to 202 (MPTWWGRKSC…SAVHGSRIGG (202 aa)) are disordered. Positions 11 to 28 (KNKDDNHRGIISTDRDIK) are enriched in basic and acidic residues. Composition is skewed to low complexity over residues 40-64 (PTRG…GFDS) and 90-108 (VSGS…SSGS). Positions 214–470 (WKKGKFLGSG…ASQLLEHPFL (257 aa)) constitute a Protein kinase domain. ATP contacts are provided by residues 220-228 (LGSGTFGQV) and Lys-243. The active-site Proton acceptor is Asp-339. Disordered stretches follow at residues 487–511 (PRSY…SHDN) and 590–609 (MEPS…SRLV). Polar residues predominate over residues 594 to 609 (SFRTQTPNSPLRSRLV).

It belongs to the protein kinase superfamily. STE Ser/Thr protein kinase family. MAP kinase kinase kinase subfamily. Interacts with PBL27. In terms of tissue distribution, expressed in flower buds, roots, leaves, seedlings, stems and immature siliques. Absent of mature pollen.

It carries out the reaction L-seryl-[protein] + ATP = O-phospho-L-seryl-[protein] + ADP + H(+). The enzyme catalyses L-threonyl-[protein] + ATP = O-phospho-L-threonyl-[protein] + ADP + H(+). The chain is Mitogen-activated protein kinase kinase kinase 3 from Arabidopsis thaliana (Mouse-ear cress).